Here is a 518-residue protein sequence, read N- to C-terminus: Calcium-dependent protein kinase 1 (518 aa).

A compositionally biased stretch (basic residues) spans 1 to 10 (MGNRTSRHHR). The disordered stretch occupies residues 1–49 (MGNRTSRHHRAAPEQPPPQPKPKPQPQQQQQQWPRPQQPTPPPAAAPDA). The N-myristoyl glycine moiety is linked to residue glycine 2. Residues 14–25 (EQPPPQPKPKPQ) are compositionally biased toward pro residues. The span at 26–35 (PQQQQQQWPR) shows a compositional bias: low complexity. Positions 36-45 (PQQPTPPPAA) are enriched in pro residues. The 259-residue stretch at 66–324 (YTFGRELGRG…SAEILNHPWI (259 aa)) folds into the Protein kinase domain. Residues 72–80 (LGRGQFGVT) and lysine 95 contribute to the ATP site. Residue aspartate 190 is the Proton acceptor of the active site. Residues 330–360 (APDKPLDITVISRMKQFRAMNKLKKVALKVV) form an autoinhibitory domain region. 4 consecutive EF-hand domains span residues 367–402 (EEITGLKEMFRSLDTDNSGTITLEELRSGLPKLGTK), 403–438 (ISESEIRQLMEAADVDGNGTIDYAEFISATMHMNRL), 439–474 (EKEDHILKAFEYFDKDHSGYITVDELEEALKKYDMG), and 475–509 (DDKTIKEIIAEVDTDHDGRINYQEFVAMMRNNNPE). Ca(2+) is bound by residues aspartate 380, aspartate 382, serine 384, threonine 386, glutamate 391, aspartate 416, aspartate 418, asparagine 420, threonine 422, glutamate 427, aspartate 452, aspartate 454, serine 456, tyrosine 458, glutamate 463, aspartate 487, aspartate 489, aspartate 491, arginine 493, and glutamate 498.

Belongs to the protein kinase superfamily. Ser/Thr protein kinase family. CDPK subfamily. Expressed in roots and leaf blades.

The protein resides in the membrane. It catalyses the reaction L-seryl-[protein] + ATP = O-phospho-L-seryl-[protein] + ADP + H(+). It carries out the reaction L-threonyl-[protein] + ATP = O-phospho-L-threonyl-[protein] + ADP + H(+). Its activity is regulated as follows. Activated by calcium. Autophosphorylation may play an important role in the regulation of the kinase activity. May play a role in signal transduction pathways that involve calcium as a second messenger. This Oryza sativa subsp. japonica (Rice) protein is Calcium-dependent protein kinase 1.